We begin with the raw amino-acid sequence, 512 residues long: Ribonuclease Y (512 aa).

A helical transmembrane segment spans residues 3-23 (FQIILVVIISALVGLVIGFFI). The region spanning 202–265 (TVAVIPLPND…EVARLALERL (64 aa)) is the KH domain. An HD domain is found at 328–421 (VLKHSIEVCH…VQAADAISAA (94 aa)).

It belongs to the RNase Y family.

It is found in the cell membrane. Its function is as follows. Endoribonuclease that initiates mRNA decay. The chain is Ribonuclease Y from Desulforamulus reducens (strain ATCC BAA-1160 / DSM 100696 / MI-1) (Desulfotomaculum reducens).